Reading from the N-terminus, the 736-residue chain is Dimethylamine dehydrogenase (736 aa).

Residue Cys31 is modified to S-6-FMN cysteine. A substrate-binding site is contributed by 176–179 (YGAH). The active-site Proton donor is Tyr181. FMN contacts are provided by Arg229 and Arg329. The [4Fe-4S] cluster site is built by Cys352, Cys355, Cys358, and Cys371. 398 to 427 (DVLIVGAGPAGSECARVLMERGYTVHLVDT) is an ADP binding site.

In the N-terminal section; belongs to the NADH:flavin oxidoreductase/NADH oxidase family. FMN is required as a cofactor. Requires [4Fe-4S] cluster as cofactor.

It catalyses the reaction dimethylamine + oxidized [electron-transfer flavoprotein] + H2O + H(+) = methylamine + reduced [electron-transfer flavoprotein] + formaldehyde. This is Dimethylamine dehydrogenase (dmd) from Hyphomicrobium sp. (strain x).